A 212-amino-acid chain; its full sequence is Ribosomal RNA small subunit methyltransferase G (212 aa).

S-adenosyl-L-methionine contacts are provided by residues Gly72, Leu77, 123 to 124, and Arg138; that span reads VE.

It belongs to the methyltransferase superfamily. RNA methyltransferase RsmG family.

Its subcellular location is the cytoplasm. It carries out the reaction guanosine(527) in 16S rRNA + S-adenosyl-L-methionine = N(7)-methylguanosine(527) in 16S rRNA + S-adenosyl-L-homocysteine. Specifically methylates the N7 position of guanine in position 527 of 16S rRNA. The protein is Ribosomal RNA small subunit methyltransferase G of Histophilus somni (strain 129Pt) (Haemophilus somnus).